The following is a 229-amino-acid chain: NAD-dependent protein deacetylase (229 aa).

The region spanning 1-229 (MNKLNEALKK…SDAVKVFAEI (229 aa)) is the Deacetylase sirtuin-type domain. NAD(+)-binding residues include alanine 20, arginine 32, glutamine 96, isoleucine 98, aspartate 99, histidine 114, threonine 181, serine 182, asparagine 205, and valine 223. 2 residues coordinate nicotinamide: isoleucine 98 and aspartate 99. The Proton acceptor role is filled by histidine 114.

It belongs to the sirtuin family. Class U subfamily.

The protein resides in the cytoplasm. The enzyme catalyses N(6)-acetyl-L-lysyl-[protein] + NAD(+) + H2O = 2''-O-acetyl-ADP-D-ribose + nicotinamide + L-lysyl-[protein]. Functionally, NAD-dependent protein deacetylase which modulates the activities of several enzymes which are inactive in their acetylated form. This Listeria monocytogenes serotype 4b (strain F2365) protein is NAD-dependent protein deacetylase.